The sequence spans 123 residues: Aberrant microtubules protein 1 (123 aa).

Required for normal microtubule organization. The sequence is that of Aberrant microtubules protein 1 (ABM1) from Saccharomyces cerevisiae (strain ATCC 204508 / S288c) (Baker's yeast).